An 842-amino-acid chain; its full sequence is Gamma-aminobutyric acid type B receptor subunit 2 (842 aa).

A signal peptide spans 1-17 (MSRWLSLLLFAVQAVGG). Over 18 to 438 (YEAGEELSCK…TERRREHISS (421 aa)) the chain is Extracellular. 4 N-linked (GlcNAc...) asparagine glycosylation sites follow: asparagine 274, asparagine 279, asparagine 327, and asparagine 366. Residues 439-459 (ILFLAMSLLALIGIFLALIFL) traverse the membrane as a helical segment. Residues 460–477 (LINFRYRNHRFIKMSSPN) lie on the Cytoplasmic side of the membrane. The helical transmembrane segment at 478 to 498 (LNNIIIAGSICTFASVIMLGL) threads the bilayer. The Extracellular segment spans residues 499–506 (DTRIVSPD). Residues 507–527 (VFVWLCYTKTWTLCIGFTLSF) traverse the membrane as a helical segment. Residues 528–556 (GAMFSKTWRVHSIFTNIRMDRKAIKDSKL) lie on the Cytoplasmic side of the membrane. A helical transmembrane segment spans residues 557 to 577 (FIILGILLFIDICVLVTWAFV). Residues 578–610 (SPFSYTVTELPHIPEDNIVIIPEVEKCNSSHSG) lie on the Extracellular side of the membrane. Asparagine 605 carries N-linked (GlcNAc...) asparagine glycosylation. The chain crosses the membrane as a helical span at residues 611 to 631 (VFQAVLYAVKGVLMILGCFLA). Topologically, residues 632–647 (WETRHVNVPALNDSKY) are cytoplasmic. The chain crosses the membrane as a helical span at residues 648 to 668 (IGTSVYCCVVMSVLGLSTSVI). The Extracellular portion of the chain corresponds to 669 to 676 (LQERVNEM). Residues 677–697 (FSLASFFVIFSTTLTLCLVFV) traverse the membrane as a helical segment. Residues 698–842 (PKVIELARNP…VDPDEPSTKL (145 aa)) lie on the Cytoplasmic side of the membrane. The segment covering 725-740 (AKTSQPMSPQPRSDSS) has biased composition (polar residues). Disordered regions lie at residues 725-744 (AKTS…GDLI) and 791-842 (SPSS…STKL).

This sequence belongs to the G-protein coupled receptor 3 family. May form a heterodimer with gbb-1. Expressed in cholinergic motor neurons.

Its subcellular location is the cell membrane. Functionally, component of a heterodimeric G-protein coupled receptor for GABA, formed by gbb-1 and gbb-2. Within the heterodimeric GABA receptor, only gbb-1 seems to bind agonists, while gbb-2 mediates coupling to G proteins. Ligand binding causes a conformation change that triggers signaling via guanine nucleotide-binding proteins (G proteins) and modulates the activity of down-stream effectors, such as adenylate cyclase. Signaling inhibits adenylate cyclase, stimulates phospholipase A2, activates potassium channels, inactivates voltage-dependent calcium-channels and modulates inositol phospholipid hydrolysis. Plays a critical role in the fine-tuning of inhibitory synaptic transmission. Pre-synaptic GABA receptor inhibits neurotransmitter release by down-regulating high-voltage activated calcium channels, whereas postsynaptic GABA receptor decreases neuronal excitability by activating a prominent inwardly rectifying potassium (Kir) conductance that underlies the late inhibitory postsynaptic potentials. Along with gbb-1, may couple to the G(o)-alpha G-protein goa-1 to negatively regulate cholinergic receptor activity in the presence of high levels of acetylcholine in ventral cord motor neurons. As acetylcholine depolarizes body wall muscles, modulation of acetylcholine levels most likely results in the control of locomotory behavior. Regulates locomotory behavior in response to GABA release by GABAergic motor neurons. This chain is Gamma-aminobutyric acid type B receptor subunit 2, found in Caenorhabditis elegans.